A 224-amino-acid polypeptide reads, in one-letter code: CRP-like cAMP-activated global transcriptional regulator (224 aa).

3',5'-cyclic AMP-binding positions include 64–70 (GRENLLT), 79–82 (GELS), 89–90 (RT), 134–135 (TN), 142–143 (IF), and 178–188 (EEIAQLVGASR). The region spanning 144–217 (TDVPGRVAKQ…GKSVLISDSE (74 aa)) is the HTH crp-type domain. Residues 177-196 (QEEIAQLVGASRETVNKALA) constitute a DNA-binding region (H-T-H motif).

As to quaternary structure, homodimer.

Global transcriptional regulator that complexes with cAMP and binds to specific DNA promoter sites, causing DNA-bending, to regulate transcription. cAMP improves binding to specific DNA sequences, probably by altering protein conformation. Activates expression of whiB1. This Mycobacterium tuberculosis (strain CDC 1551 / Oshkosh) protein is CRP-like cAMP-activated global transcriptional regulator.